Consider the following 1165-residue polypeptide: Phenyloxazoline synthase MbtB (1165 aa).

In terms of domain architecture, Carrier 1 spans 5 to 78 (PARSEDIREE…AWAQLVTAGR (74 aa)). Ser-39 carries the O-(pantetheine 4'-phosphoryl)serine modification. The disordered stretch occupies residues 77 to 100 (GRQDTDSAAPPADSSGDPSGETEP). A condensation/cyclization region spans residues 97–393 (ETEPFALAPM…SSLLLDVDLV (297 aa)). The interval 578–973 (SYAQLRDQAL…RVPGVRTAVA (396 aa)) is adenylation. Residues 1055 to 1131 (AASTPLEGAL…ALAAVLRAAE (77 aa)) form the Carrier 2 domain. Residue Ser-1090 is modified to O-(pantetheine 4'-phosphoryl)serine.

Belongs to the ATP-dependent AMP-binding enzyme family. MbtB subfamily. The cofactor is pantetheine 4'-phosphate. 4'-phosphopantetheine is transferred from CoA to a specific serine in each of the two carrier protein domains, leading to their activation from apo to holo forms.

It functions in the pathway siderophore biosynthesis; mycobactin biosynthesis. Involved in the initial steps of the mycobactin biosynthetic pathway. Putatively couples activated salicylic acid with serine or threonine and cyclizes this precursor to the hydroxyphenyloxazoline ring system present in this class of siderophores. This chain is Phenyloxazoline synthase MbtB (mbtB), found in Mycolicibacterium paratuberculosis (strain ATCC BAA-968 / K-10) (Mycobacterium paratuberculosis).